The following is a 171-amino-acid chain: Inosine/xanthosine triphosphatase (171 aa).

Threonine 8–lysine 13 contacts substrate. Glutamate 38 lines the Mg(2+) pocket.

This sequence belongs to the YjjX NTPase family. As to quaternary structure, homodimer. The cofactor is Mg(2+). It depends on Mn(2+) as a cofactor.

It carries out the reaction XTP + H2O = XDP + phosphate + H(+). The catalysed reaction is ITP + H2O = IDP + phosphate + H(+). Functionally, phosphatase that hydrolyzes non-canonical purine nucleotides such as XTP and ITP to their respective diphosphate derivatives. Probably excludes non-canonical purines from DNA/RNA precursor pool, thus preventing their incorporation into DNA/RNA and avoiding chromosomal lesions. In Klebsiella pneumoniae (strain 342), this protein is Inosine/xanthosine triphosphatase.